The sequence spans 417 residues: Serine--tRNA ligase (417 aa).

226–228 (TSE) contacts L-serine. ATP contacts are provided by residues 257-259 (RRE) and Val-273. Residue Glu-280 coordinates L-serine. ATP is bound at residue 344 to 347 (EVTS). Thr-379 contributes to the L-serine binding site.

Belongs to the class-II aminoacyl-tRNA synthetase family. Type-1 seryl-tRNA synthetase subfamily. Homodimer. The tRNA molecule binds across the dimer.

It is found in the cytoplasm. It carries out the reaction tRNA(Ser) + L-serine + ATP = L-seryl-tRNA(Ser) + AMP + diphosphate + H(+). It catalyses the reaction tRNA(Sec) + L-serine + ATP = L-seryl-tRNA(Sec) + AMP + diphosphate + H(+). Its pathway is aminoacyl-tRNA biosynthesis; selenocysteinyl-tRNA(Sec) biosynthesis; L-seryl-tRNA(Sec) from L-serine and tRNA(Sec): step 1/1. Its function is as follows. Catalyzes the attachment of serine to tRNA(Ser). Is also able to aminoacylate tRNA(Sec) with serine, to form the misacylated tRNA L-seryl-tRNA(Sec), which will be further converted into selenocysteinyl-tRNA(Sec). The protein is Serine--tRNA ligase of Tropheryma whipplei (strain TW08/27) (Whipple's bacillus).